A 376-amino-acid chain; its full sequence is MQWASILLLAGLCSLSWAQYEEDSHWWFQFLRNQQSTYDDPYDPYPYEPYEPYPYGGEEGPAYAYGSPPQPEPRDCPQECDCPPNFPTAMYCDNRNLKYLPFVPSRMKYVYFQNNQISSIQEGVFDNATGLLWIALHGNQITSDKVGKKVFSKLRHLERLYLDHNNLTRIPSPLPRSLRELHLDHNQISRVPNNALEGLENLTALYLHHNEIQEVGSSMKGLRSLILLDLSYNHLRKVPDGLPSALEQLYLEHNNVFSVPDSYFRGSPKLLYVRLSHNSLTNNGLASNTFNSSSLLELDLSYNQLQKIPPVSTNLENLYLQGNRINEFSISSFCTVVDVMNFSKLQVLRLDGNEIKRSAMPADAPLCLRLASLIEI.

A signal peptide spans 1–18 (MQWASILLLAGLCSLSWA). The residue at position 19 (glutamine 19) is a Pyrrolidone carboxylic acid. 9 positions are modified to sulfotyrosine: tyrosine 20, tyrosine 38, tyrosine 45, tyrosine 47, tyrosine 50, tyrosine 53, tyrosine 55, tyrosine 63, and tyrosine 65. One can recognise an LRRNT domain in the interval 67-105 (SPPQPEPRDCPQECDCPPNFPTAMYCDNRNLKYLPFVPS). LRR repeat units lie at residues 106–127 (RMKYVYFQNNQISSIQEGVFDN), 130–151 (GLLWIALHGNQITSDKVGKKVF), 156–176 (HLERLYLDHNNLTRIPSPLPR), 177–198 (SLRELHLDHNQISRVPNNALEG), 201–222 (NLTALYLHHNEIQEVGSSMKGL), 224–245 (SLILLDLSYNHLRKVPDGLPSA), 246–266 (LEQLYLEHNNVFSVPDSYFRG), and 269–289 (KLLYVRLSHNSLTNNGLASNT). Asparagine 127 is a glycosylation site (N-linked (GlcNAc...) (keratan sulfate) asparagine). Asparagine 166 carries an N-linked (GlcNAc...) (keratan sulfate) asparagine glycan. N-linked (GlcNAc...) (keratan sulfate) asparagine glycosylation is present at asparagine 201. A glycan (N-linked (GlcNAc...) (keratan sulfate) asparagine) is linked at asparagine 291. 2 LRR repeats span residues 294-315 (SLLELDLSYNQLQKIPPVSTNL) and 316-335 (ENLYLQGNRINEFSISSFCT). A disulfide bridge connects residues cysteine 334 and cysteine 367. A glycan (N-linked (GlcNAc...) asparagine) is linked at asparagine 341. The LRR 11 repeat unit spans residues 344 to 365 (KLQVLRLDGNEIKRSAMPADAP).

It belongs to the small leucine-rich proteoglycan (SLRP) family. SLRP class II subfamily. As to quaternary structure, binds to type I and type II collagen. Post-translationally, binds keratan sulfate chains.

Its subcellular location is the secreted. It is found in the extracellular space. The protein resides in the extracellular matrix. Affects the rate of fibrils formation. May have a primary role in collagen fibrillogenesis. This chain is Fibromodulin (FMOD), found in Bos taurus (Bovine).